A 528-amino-acid chain; its full sequence is Benzoylformate decarboxylase (528 aa).

Residues Asn117, Leu118, and Arg120 each contribute to the Mg(2+) site. The segment at 377-460 (TSTTAQMWQR…VIMNNGTYGA (84 aa)) is thiamine pyrophosphate binding. Asp428, Asn455, and Thr457 together coordinate Ca(2+).

The protein belongs to the TPP enzyme family. In terms of assembly, homotetramer. Ca(2+) is required as a cofactor. Requires thiamine diphosphate as cofactor. The cofactor is Mg(2+).

It carries out the reaction phenylglyoxylate + H(+) = benzaldehyde + CO2. It participates in aromatic compound metabolism; (R)-mandelate degradation; benzoate from (R)-mandelate: step 3/4. This Pseudomonas putida (Arthrobacter siderocapsulatus) protein is Benzoylformate decarboxylase (mdlC).